Reading from the N-terminus, the 444-residue chain is MAERKYFGTDGVRGKVGTFPITPDFALKLGWAAGKVLATQGSRTVLIGKDTRISGYMLESALEAGLAAAGLSAAFTGPMPTPAIAYLTRTFRAEAGIVISASHNPYYDNGIKFFSAQGTKLPDDVEEAIEAMLDEPMDCVESAELGRASRINDAVGRYIEFCKGTFPAHLSLENYKIVVDCAHGATYHIAPNVMRELGAEVIEIGAKPNGLNINEKCGATDIKALQEKVLEVKADVGLAYDGDGDRLIMVDHLGNKVDGDQVLFIIAREALRAGHLKGGVVGTLMSNMSLELALKQLGIPFVRANVGDRYVLEKMQEKGWLLGGENSGHIIILDKNTTGDGIIASLAVLSAMVQHNLSLNELASAVPLFPQVLINVRFAGGDNPLESAAVKAVAAEVEKRLAGKGRILLRKSGTEPLIRVMVECEDGALAQQCAEQIADVVRAN.

Ser102 functions as the Phosphoserine intermediate in the catalytic mechanism. Ser102, Asp241, Asp243, and Asp245 together coordinate Mg(2+). Residue Ser102 is modified to Phosphoserine.

It belongs to the phosphohexose mutase family. The cofactor is Mg(2+). Post-translationally, activated by phosphorylation.

The catalysed reaction is alpha-D-glucosamine 1-phosphate = D-glucosamine 6-phosphate. Its function is as follows. Catalyzes the conversion of glucosamine-6-phosphate to glucosamine-1-phosphate. The protein is Phosphoglucosamine mutase of Pasteurella multocida (strain Pm70).